The sequence spans 1531 residues: Myosin-17 (1531 aa).

One can recognise a Myosin N-terminal SH3-like domain in the interval 8 to 57 (IVGSHVWIEDPGAAWIDGEVVKINGEEVHAHTTNGKTVVANIANVFPKDT). The 671-residue stretch at 62–732 (GGVDDMTKLS…QMAELDARRA (671 aa)) folds into the Myosin motor domain. Residues 156–163 (GESGAGKT) and 209–217 (NNNSSRFGK) each bind ATP. 4 actin-binding regions span residues 495–529 (LIEK…YQTF), 531–554 (NYKR…AGEV), 589–613 (FPRL…KLQL), and 613–635 (LQSL…KPNN). 5 IQ domains span residues 758 to 787 (LRGA…QAAA), 783 to 812 (RQAA…STIT), 806 to 835 (IRHS…MKAA), 831 to 860 (QMKA…AALS), and 854 to 883 (LQKA…AARD). A coiled-coil region spans residues 884 to 1056 (TGALREAKDK…VLRQQALAIS (173 aa)). Residues 1071-1090 (LPRTPENGNYLNGGTKTTPD) form a disordered region. Residues 1076–1090 (ENGNYLNGGTKTTPD) are compositionally biased toward polar residues. A Dilute domain is found at 1159-1470 (DRIIQTIATA…IANMRVMMTE (312 aa)). The residue at position 1517 (Ser1517) is a Phosphoserine.

This sequence belongs to the TRAFAC class myosin-kinesin ATPase superfamily. Myosin family. Plant myosin class XI subfamily. In terms of assembly, homodimer. Interacts with MYOB1, MYOB2 and MYOB3. Interacts with PHOX1 and PHOX2. Expressed ubiquitously.

The protein localises to the cytoplasm. Its function is as follows. Myosin heavy chain that is required for the cell cycle-regulated transport of various organelles and proteins for their segregation. Functions by binding with its tail domain to receptor proteins on organelles and exerting force with its N-terminal motor domain against actin filaments, thereby transporting its cargo along polarized actin cables. Involved in the tip growth of root hair cells and in the elongation of trichome stalk and branches. Plays a major role in trafficking of Golgi stacks, mitochondria and peroxisomes during root hair development. Acts as the primary contributor to ER streaming with a major role in the movement of Golgi bodies. Required for development of pavement cells, trichomes, and stigmatic papillae. Together with XI-F, required for the regulation of organ bending, such as gravitropic root bending. In Arabidopsis thaliana (Mouse-ear cress), this protein is Myosin-17.